The sequence spans 361 residues: D-alanine--D-alanine ligase (361 aa).

Residues 140-345 form the ATP-grasp domain; sequence KHLFAQAGLD…YAELIEKLVA (206 aa). 173-228 contacts ATP; that stretch reads EGELGYPCFVKPANLGSSVGISKCRSREELDQAFELAFQYDRKIVVEEGVIGREIE. Residues Asp299, Glu312, and Asn314 each contribute to the Mg(2+) site.

Belongs to the D-alanine--D-alanine ligase family. Mg(2+) is required as a cofactor. It depends on Mn(2+) as a cofactor.

It is found in the cytoplasm. It catalyses the reaction 2 D-alanine + ATP = D-alanyl-D-alanine + ADP + phosphate + H(+). Its pathway is cell wall biogenesis; peptidoglycan biosynthesis. Cell wall formation. This is D-alanine--D-alanine ligase from Bacillus licheniformis (strain ATCC 14580 / DSM 13 / JCM 2505 / CCUG 7422 / NBRC 12200 / NCIMB 9375 / NCTC 10341 / NRRL NRS-1264 / Gibson 46).